Consider the following 95-residue polypeptide: Integration host factor subunit beta (95 aa).

Positions 56-76 (RAPRTGRNPKTGSSVDLEGKY) are disordered.

This sequence belongs to the bacterial histone-like protein family. In terms of assembly, heterodimer of an alpha and a beta chain.

In terms of biological role, this protein is one of the two subunits of integration host factor, a specific DNA-binding protein that functions in genetic recombination as well as in transcriptional and translational control. This chain is Integration host factor subunit beta, found in Shewanella baltica (strain OS223).